A 92-amino-acid chain; its full sequence is Putative pterin-4-alpha-carbinolamine dehydratase (92 aa).

Belongs to the pterin-4-alpha-carbinolamine dehydratase family.

It catalyses the reaction (4aS,6R)-4a-hydroxy-L-erythro-5,6,7,8-tetrahydrobiopterin = (6R)-L-erythro-6,7-dihydrobiopterin + H2O. This is Putative pterin-4-alpha-carbinolamine dehydratase from Picosynechococcus sp. (strain ATCC 27264 / PCC 7002 / PR-6) (Agmenellum quadruplicatum).